The primary structure comprises 253 residues: Imidazole glycerol phosphate synthase subunit HisF (253 aa).

Catalysis depends on residues D11 and D130.

Belongs to the HisA/HisF family. As to quaternary structure, heterodimer of HisH and HisF.

It is found in the cytoplasm. The catalysed reaction is 5-[(5-phospho-1-deoxy-D-ribulos-1-ylimino)methylamino]-1-(5-phospho-beta-D-ribosyl)imidazole-4-carboxamide + L-glutamine = D-erythro-1-(imidazol-4-yl)glycerol 3-phosphate + 5-amino-1-(5-phospho-beta-D-ribosyl)imidazole-4-carboxamide + L-glutamate + H(+). The protein operates within amino-acid biosynthesis; L-histidine biosynthesis; L-histidine from 5-phospho-alpha-D-ribose 1-diphosphate: step 5/9. Functionally, IGPS catalyzes the conversion of PRFAR and glutamine to IGP, AICAR and glutamate. The HisF subunit catalyzes the cyclization activity that produces IGP and AICAR from PRFAR using the ammonia provided by the HisH subunit. The protein is Imidazole glycerol phosphate synthase subunit HisF of Clostridium botulinum (strain Kyoto / Type A2).